Here is an 85-residue protein sequence, read N- to C-terminus: Toxin TdNa9 (85 aa).

The N-terminal stretch at 1–21 (MLKFAIAVALLLFIGLELREA) is a signal peptide. Positions 22 to 84 (RDGYPQSKVN…YGDPGTKPCM (63 aa)) constitute an LCN-type CS-alpha/beta domain. Cystine bridges form between cysteine 33–cysteine 83, cysteine 37–cysteine 58, cysteine 43–cysteine 63, and cysteine 47–cysteine 65.

It belongs to the long (4 C-C) scorpion toxin superfamily. Sodium channel inhibitor family. Beta subfamily. Expressed by the venom gland.

Its subcellular location is the secreted. Its function is as follows. Alpha toxins bind voltage-independently at site-3 of sodium channels (Nav) and inhibit the inactivation of the activated channels, thereby blocking neuronal transmission. This toxin binds, in vitro, to sodium channels and inhibits the inactivation of the activated channels. Seems not toxic to mice, crickets and sweet-water shrimps. This is Toxin TdNa9 from Tityus discrepans (Venezuelan scorpion).